Consider the following 345-residue polypeptide: Transcription factor STKL1 (345 aa).

The interval 1-145 is disordered; it reads MASLENPAID…KKGHAQRVWS (145 aa). Low complexity predominate over residues 11–22; sequence SSSEFESSSEEI. The span at 23–32 shows a compositional bias: basic and acidic residues; that stretch reads SSSKESKPKE. The segment covering 37-46 has biased composition (polar residues); that stretch reads VPSTKTLNSP. Ser105 is subject to Phosphoserine. Residues 114 to 137 are compositionally biased toward basic and acidic residues; that stretch reads RASEGTTSRDMHVKRIKKEGDNKK.

The protein belongs to the GeBP family. Expressed strongly in leaves and flowers, weakly in roots, and very weakly in stems.

The protein localises to the nucleus. Transcription repressor that binds DNA in a sequence-specific manner, 5'-GCCT-3', to regulate the expression of PGR. Acts as a modulatory component for the glucose-triggered developmental leaf growth process. In Arabidopsis thaliana (Mouse-ear cress), this protein is Transcription factor STKL1.